The primary structure comprises 626 residues: Chaperone protein HtpG (626 aa).

Residues 1-329 (MSEETLSFQA…SSDLPLNVSR (329 aa)) are a; substrate-binding. Residues 330–549 (EMLQDDPRLR…EGAMSLHLQK (220 aa)) form a b region. The interval 550–626 (LLRQANQGSE…LTEVMGKGLI (77 aa)) is c.

The protein belongs to the heat shock protein 90 family. As to quaternary structure, homodimer.

It localises to the cytoplasm. Functionally, molecular chaperone. Has ATPase activity. This Rhodospirillum rubrum (strain ATCC 11170 / ATH 1.1.1 / DSM 467 / LMG 4362 / NCIMB 8255 / S1) protein is Chaperone protein HtpG.